The primary structure comprises 438 residues: Xaa-Pro dipeptidase 2 (438 aa).

Mn(2+) contacts are provided by Asp-242, Asp-253, His-333, Glu-378, and Glu-414.

The protein belongs to the peptidase M24B family. Bacterial-type prolidase subfamily. It depends on Mn(2+) as a cofactor.

It catalyses the reaction Xaa-L-Pro dipeptide + H2O = an L-alpha-amino acid + L-proline. Functionally, splits dipeptides with a prolyl residue in the C-terminal position. The sequence is that of Xaa-Pro dipeptidase 2 from Idiomarina loihiensis (strain ATCC BAA-735 / DSM 15497 / L2-TR).